Here is a 183-residue protein sequence, read N- to C-terminus: Threonylcarbamoyl-AMP synthase (183 aa).

In terms of domain architecture, YrdC-like spans 1 to 183 (MELAQIVERL…IFSRQIFRRG (183 aa)).

It belongs to the SUA5 family. TsaC subfamily.

It is found in the cytoplasm. It catalyses the reaction L-threonine + hydrogencarbonate + ATP = L-threonylcarbamoyladenylate + diphosphate + H2O. In terms of biological role, required for the formation of a threonylcarbamoyl group on adenosine at position 37 (t(6)A37) in tRNAs that read codons beginning with adenine. Catalyzes the conversion of L-threonine, HCO(3)(-)/CO(2) and ATP to give threonylcarbamoyl-AMP (TC-AMP) as the acyladenylate intermediate, with the release of diphosphate. In Mannheimia succiniciproducens (strain KCTC 0769BP / MBEL55E), this protein is Threonylcarbamoyl-AMP synthase.